The chain runs to 407 residues: Aminomethyltransferase, mitochondrial (407 aa).

The transit peptide at 1–29 (MRGGLWQVGQSITRRLGQSDKKTIVRRWY) directs the protein to the mitochondrion. Residues Glu234, Arg265, and Tyr403 each contribute to the substrate site.

This sequence belongs to the GcvT family. The glycine cleavage system is composed of four proteins: P, T, L and H.

The protein resides in the mitochondrion. It carries out the reaction N(6)-[(R)-S(8)-aminomethyldihydrolipoyl]-L-lysyl-[protein] + (6S)-5,6,7,8-tetrahydrofolate = N(6)-[(R)-dihydrolipoyl]-L-lysyl-[protein] + (6R)-5,10-methylene-5,6,7,8-tetrahydrofolate + NH4(+). In terms of biological role, the glycine cleavage system catalyzes the degradation of glycine. This chain is Aminomethyltransferase, mitochondrial (GDCST), found in Flaveria trinervia (Clustered yellowtops).